We begin with the raw amino-acid sequence, 291 residues long: ATP synthase subunit b 2 (291 aa).

A helical transmembrane segment spans residues 2-22; sequence LIDGFTVVAQIVNFLILVWLL.

It belongs to the ATPase B chain family. In terms of assembly, F-type ATPases have 2 components, F(1) - the catalytic core - and F(0) - the membrane proton channel. F(1) has five subunits: alpha(3), beta(3), gamma(1), delta(1), epsilon(1). F(0) has three main subunits: a(1), b(2) and c(10-14). The alpha and beta chains form an alternating ring which encloses part of the gamma chain. F(1) is attached to F(0) by a central stalk formed by the gamma and epsilon chains, while a peripheral stalk is formed by the delta and b chains.

Its subcellular location is the cell inner membrane. Its function is as follows. F(1)F(0) ATP synthase produces ATP from ADP in the presence of a proton or sodium gradient. F-type ATPases consist of two structural domains, F(1) containing the extramembraneous catalytic core and F(0) containing the membrane proton channel, linked together by a central stalk and a peripheral stalk. During catalysis, ATP synthesis in the catalytic domain of F(1) is coupled via a rotary mechanism of the central stalk subunits to proton translocation. Component of the F(0) channel, it forms part of the peripheral stalk, linking F(1) to F(0). This Nitrosospira multiformis (strain ATCC 25196 / NCIMB 11849 / C 71) protein is ATP synthase subunit b 2.